A 127-amino-acid polypeptide reads, in one-letter code: uncharacterized protein (127 aa).

The first 16 residues, 1–16, serve as a signal peptide directing secretion; the sequence is MLKKIIFGITISLTTG. The N-palmitoyl cysteine moiety is linked to residue Cys-17. Cys-17 carries S-diacylglycerol cysteine lipidation. Residues 56 to 101 are a coiled coil; the sequence is EVREEIQKYRVEIVDINKKKRELYNRLSKEAQSFLAEQQKYKQKLS. The segment at 102 to 127 is disordered; that stretch reads IPKLLIENDPKNNTANSKDNNDKDMK.

Its subcellular location is the cell membrane. This is an uncharacterized protein from Rickettsia prowazekii (strain Madrid E).